The chain runs to 405 residues: Pyruvate decarboxylase 2 (405 aa).

The interval 232–314 (DSWFNCQKLK…FLINNGGYTI (83 aa)) is thiamine pyrophosphate binding. Mg(2+) contacts are provided by aspartate 282, asparagine 309, and glycine 311. Glutamate 315 provides a ligand contact to substrate.

It belongs to the TPP enzyme family. Homotetramer. A metal cation is required as a cofactor. Thiamine diphosphate serves as cofactor.

The enzyme catalyses a 2-oxocarboxylate + H(+) = an aldehyde + CO2. This Pisum sativum (Garden pea) protein is Pyruvate decarboxylase 2 (PDC2).